We begin with the raw amino-acid sequence, 277 residues long: Diaminopimelate epimerase (277 aa).

The substrate site is built by Asn-13, Gln-46, and Asn-66. Cys-75 acts as the Proton donor in catalysis. Substrate is bound by residues 76 to 77 (GN), Asn-160, Asn-193, and 211 to 212 (ER). The active-site Proton acceptor is the Cys-220. 221–222 (GS) contributes to the substrate binding site.

It belongs to the diaminopimelate epimerase family. In terms of assembly, homodimer.

The protein localises to the cytoplasm. It carries out the reaction (2S,6S)-2,6-diaminopimelate = meso-2,6-diaminopimelate. The protein operates within amino-acid biosynthesis; L-lysine biosynthesis via DAP pathway; DL-2,6-diaminopimelate from LL-2,6-diaminopimelate: step 1/1. Catalyzes the stereoinversion of LL-2,6-diaminopimelate (L,L-DAP) to meso-diaminopimelate (meso-DAP), a precursor of L-lysine and an essential component of the bacterial peptidoglycan. The protein is Diaminopimelate epimerase of Legionella pneumophila (strain Corby).